The sequence spans 366 residues: Ribonuclease P protein subunit drpp30 (366 aa).

Residues 265 to 366 form a disordered region; sequence EDTQPTNNNI…DIDNNKRKRE (102 aa). Positions 275–290 are enriched in basic and acidic residues; it reads PHEKHINKESTGKETI. 2 stretches are compositionally biased toward low complexity: residues 291–324 and 333–351; these read PKPT…TPSI and TAKS…AQKQ. Positions 352 to 366 are enriched in basic and acidic residues; it reads GKMDIDIDNNKRKRE.

This sequence belongs to the eukaryotic/archaeal RNase P protein component 3 family.

It is found in the nucleus. It catalyses the reaction Endonucleolytic cleavage of RNA, removing 5'-extranucleotides from tRNA precursor.. Component of ribonuclease P, a protein complex that generates mature tRNA molecules by cleaving their 5'-ends. The polypeptide is Ribonuclease P protein subunit drpp30 (drpp30) (Dictyostelium discoideum (Social amoeba)).